Reading from the N-terminus, the 697-residue chain is Potassium-transporting ATPase ATP-binding subunit (697 aa).

4 helical membrane passes run 55–75, 79–99, 245–265, and 271–291; these read PIMF…FLPS, SIPG…VLFA, LTLI…YLGF, and VLVA…LSAI. Asp-324 serves as the catalytic 4-aspartylphosphate intermediate. Residues Asp-361, Glu-365, 393 to 400, and Lys-412 contribute to the ATP site; that span reads FKAETRMS. Mg(2+) is bound by residues Asp-535 and Asp-539. 3 consecutive transmembrane segments (helical) span residues 605-625, 633-653, and 677-697; these read FAII…LNIM, AILS…PLAM, and GGVI…GLFI.

It belongs to the cation transport ATPase (P-type) (TC 3.A.3) family. Type IA subfamily. As to quaternary structure, the system is composed of three essential subunits: KdpA, KdpB and KdpC.

It localises to the cell membrane. It catalyses the reaction K(+)(out) + ATP + H2O = K(+)(in) + ADP + phosphate + H(+). Its function is as follows. Part of the high-affinity ATP-driven potassium transport (or Kdp) system, which catalyzes the hydrolysis of ATP coupled with the electrogenic transport of potassium into the cytoplasm. This subunit is responsible for energy coupling to the transport system and for the release of the potassium ions to the cytoplasm. This chain is Potassium-transporting ATPase ATP-binding subunit, found in Bacillus cereus (strain G9842).